Consider the following 130-residue polypeptide: Small ribosomal subunit protein uS8 (130 aa).

This sequence belongs to the universal ribosomal protein uS8 family. As to quaternary structure, part of the 30S ribosomal subunit.

One of the primary rRNA binding proteins, it binds directly to 16S rRNA central domain where it helps coordinate assembly of the platform of the 30S subunit. The sequence is that of Small ribosomal subunit protein uS8 from Thermococcus kodakarensis (strain ATCC BAA-918 / JCM 12380 / KOD1) (Pyrococcus kodakaraensis (strain KOD1)).